The following is a 119-amino-acid chain: Large ribosomal subunit protein P3z (119 aa).

Residues A79–G90 are compositionally biased toward gly residues. Positions A79–G119 are disordered. Positions P96–E105 are enriched in basic and acidic residues.

This sequence belongs to the eukaryotic ribosomal protein P1/P2 family. Phosphorylated.

Functionally, plays an important role in the elongation step of protein synthesis. The polypeptide is Large ribosomal subunit protein P3z (RPP3A) (Arabidopsis thaliana (Mouse-ear cress)).